We begin with the raw amino-acid sequence, 87 residues long: Sodium channel neurotoxin MeuNaTxalpha-5* (87 aa).

The first 19 residues, 1 to 19 (MNYLILISFALLVITGVES), serve as a signal peptide directing secretion. One can recognise an LCN-type CS-alpha/beta domain in the interval 21 to 85 (RDAYIAKPHN…VPIRIPGKCH (65 aa)). 4 cysteine pairs are disulfide-bonded: Cys-31–Cys-84, Cys-35–Cys-57, Cys-43–Cys-67, and Cys-47–Cys-69. The propeptide at 86–87 (RR) is removed by a carboxypeptidase.

Belongs to the long (4 C-C) scorpion toxin superfamily. Sodium channel inhibitor family. Alpha subfamily. Expressed by the venom gland.

Its subcellular location is the secreted. Its function is as follows. Alpha toxins bind voltage-independently at site-3 of sodium channels (Nav) and inhibit the inactivation of the activated channels, thereby blocking neuronal transmission. This toxin inhibits inactivation of Nav1.6/SCN8A (EC(50)=790 nM) and drosophila DmNav1 (EC(50)=280 nM). The toxin (1 uM) does not significantly shift the midpoint of activation at the two channels, but induces a significant depolarizing shift in the V(1/2) of inactivation of the channels. Has antimicrobial activity. In Mesobuthus eupeus (Lesser Asian scorpion), this protein is Sodium channel neurotoxin MeuNaTxalpha-5*.